The chain runs to 87 residues: Cell division topological specificity factor (87 aa).

Belongs to the MinE family.

In terms of biological role, prevents the cell division inhibition by proteins MinC and MinD at internal division sites while permitting inhibition at polar sites. This ensures cell division at the proper site by restricting the formation of a division septum at the midpoint of the long axis of the cell. This Neisseria gonorrhoeae (strain ATCC 700825 / FA 1090) protein is Cell division topological specificity factor.